A 257-amino-acid polypeptide reads, in one-letter code: Thiazole synthase (257 aa).

The active-site Schiff-base intermediate with DXP is Lys-97. Residues Gly-158, 184 to 185 (AG), and 206 to 207 (NT) each bind 1-deoxy-D-xylulose 5-phosphate.

Belongs to the ThiG family. In terms of assembly, homotetramer. Forms heterodimers with either ThiH or ThiS.

Its subcellular location is the cytoplasm. It carries out the reaction [ThiS sulfur-carrier protein]-C-terminal-Gly-aminoethanethioate + 2-iminoacetate + 1-deoxy-D-xylulose 5-phosphate = [ThiS sulfur-carrier protein]-C-terminal Gly-Gly + 2-[(2R,5Z)-2-carboxy-4-methylthiazol-5(2H)-ylidene]ethyl phosphate + 2 H2O + H(+). The protein operates within cofactor biosynthesis; thiamine diphosphate biosynthesis. Functionally, catalyzes the rearrangement of 1-deoxy-D-xylulose 5-phosphate (DXP) to produce the thiazole phosphate moiety of thiamine. Sulfur is provided by the thiocarboxylate moiety of the carrier protein ThiS. In vitro, sulfur can be provided by H(2)S. The polypeptide is Thiazole synthase (Phocaeicola vulgatus (strain ATCC 8482 / DSM 1447 / JCM 5826 / CCUG 4940 / NBRC 14291 / NCTC 11154) (Bacteroides vulgatus)).